Reading from the N-terminus, the 469-residue chain is 3-isopropylmalate dehydratase large subunit (469 aa).

Cysteine 347, cysteine 410, and cysteine 413 together coordinate [4Fe-4S] cluster.

The protein belongs to the aconitase/IPM isomerase family. LeuC type 1 subfamily. Heterodimer of LeuC and LeuD. Requires [4Fe-4S] cluster as cofactor.

It carries out the reaction (2R,3S)-3-isopropylmalate = (2S)-2-isopropylmalate. It functions in the pathway amino-acid biosynthesis; L-leucine biosynthesis; L-leucine from 3-methyl-2-oxobutanoate: step 2/4. Catalyzes the isomerization between 2-isopropylmalate and 3-isopropylmalate, via the formation of 2-isopropylmaleate. The chain is 3-isopropylmalate dehydratase large subunit from Cupriavidus pinatubonensis (strain JMP 134 / LMG 1197) (Cupriavidus necator (strain JMP 134)).